Here is a 722-residue protein sequence, read N- to C-terminus: Tegument protein UL46 (722 aa).

The interval 423–534 (RLAASGPPGG…AAAARPLAAQ (112 aa)) is disordered. Composition is skewed to basic and acidic residues over residues 440–451 (CRDKIQRTRRDN) and 474–491 (HRED…DRGP). The span at 510–522 (PRLPPRNPAPPEQ) shows a compositional bias: pro residues. The segment covering 523–534 (RPAAAARPLAAQ) has biased composition (low complexity).

It belongs to the herpesviridae HHV-1 VP11/12 protein family. As to quaternary structure, interacts with VP16. Interacts with host LCK, PIK3R1, SHC1 AND GRB2; these interactions promote the activation of the PI3K/AKT pathway. Interacts with host YWHAB. Interacts with ICP0; this interaction targets UL46 for degradation by the proteasome. Post-translationally, phosphorylated by host LCK. The phosphorylation seems to be lymphocyte-specific.

The protein resides in the virion tegument. Its subcellular location is the host cell membrane. Plays a role in the activation of the host PI3K/AKT pathway to promote cell survival. Interacts with and activates host LCK and thereby recruits downstream partners SHC1, GRB2 and PI3KR1 in order to activate the PI3K pathway by phosphorylating host AKT on its activating residues. This mechanism is inhibited by the viral protein US3 that instead promotes incorporation of UL46 into virions. This is Tegument protein UL46 from Homo sapiens (Human).